The following is a 427-amino-acid chain: Peptidase B (427 aa).

Residues Lys-195 and Asp-200 each contribute to the Mn(2+) site. Lys-207 is a catalytic residue. Asp-218, Asp-277, and Glu-279 together coordinate Mn(2+). Arg-281 is an active-site residue.

This sequence belongs to the peptidase M17 family. As to quaternary structure, homohexamer. Mn(2+) is required as a cofactor.

It is found in the cytoplasm. The enzyme catalyses Release of an N-terminal amino acid, Xaa, from a peptide or arylamide. Xaa is preferably Glu or Asp but may be other amino acids, including Leu, Met, His, Cys and Gln.. In terms of biological role, probably plays an important role in intracellular peptide degradation. The chain is Peptidase B from Citrobacter koseri (strain ATCC BAA-895 / CDC 4225-83 / SGSC4696).